The primary structure comprises 247 residues: Small ribosomal subunit protein uS3 (247 aa).

A KH type-2 domain is found at 39-109 (IRSMIRSFPE…KVQIKVKEIK (71 aa)). The segment at 224-247 (RSRRESGQKSDELVRDERTHAERG) is disordered. Over residues 227 to 247 (RESGQKSDELVRDERTHAERG) the composition is skewed to basic and acidic residues.

Belongs to the universal ribosomal protein uS3 family. In terms of assembly, part of the 30S ribosomal subunit. Forms a tight complex with proteins S10 and S14.

Its function is as follows. Binds the lower part of the 30S subunit head. Binds mRNA in the 70S ribosome, positioning it for translation. This Treponema pallidum (strain Nichols) protein is Small ribosomal subunit protein uS3.